The following is a 406-amino-acid chain: Membrane protein UL43 homolog (406 aa).

10 consecutive transmembrane segments (helical) span residues 48 to 68 (LFLV…QYHV), 71 to 91 (AAVN…PTSV), 103 to 123 (CLQT…CPIS), 126 to 146 (LPFV…VAAV), 162 to 182 (IYFY…VILY), 188 to 208 (YEVL…VDAA), 266 to 286 (SVIP…SHII), 299 to 319 (LAVS…AVLY), 339 to 359 (IAVT…STVA), and 386 to 406 (VYHV…TYVS).

The protein belongs to the alphaherpesvirinae HHV-1 UL43 family.

It localises to the membrane. This chain is Membrane protein UL43 homolog, found in Varicella-zoster virus (strain Dumas) (HHV-3).